The following is a 121-amino-acid chain: Small ribosomal subunit protein uS13 (121 aa).

Positions 95-121 (LPMRGQRTRTNARTRKGPRKAAASLKK) are disordered.

The protein belongs to the universal ribosomal protein uS13 family. As to quaternary structure, part of the 30S ribosomal subunit. Forms a loose heterodimer with protein S19. Forms two bridges to the 50S subunit in the 70S ribosome.

Its function is as follows. Located at the top of the head of the 30S subunit, it contacts several helices of the 16S rRNA. In the 70S ribosome it contacts the 23S rRNA (bridge B1a) and protein L5 of the 50S subunit (bridge B1b), connecting the 2 subunits; these bridges are implicated in subunit movement. Contacts the tRNAs in the A and P-sites. In Polaromonas naphthalenivorans (strain CJ2), this protein is Small ribosomal subunit protein uS13.